Consider the following 129-residue polypeptide: Small ribosomal subunit protein uS11 (129 aa).

The protein belongs to the universal ribosomal protein uS11 family. Part of the 30S ribosomal subunit. Interacts with proteins S7 and S18. Binds to IF-3.

Located on the platform of the 30S subunit, it bridges several disparate RNA helices of the 16S rRNA. Forms part of the Shine-Dalgarno cleft in the 70S ribosome. This Baumannia cicadellinicola subsp. Homalodisca coagulata protein is Small ribosomal subunit protein uS11.